The following is a 151-amino-acid chain: SsrA-binding protein (151 aa).

The protein belongs to the SmpB family.

Its subcellular location is the cytoplasm. In terms of biological role, required for rescue of stalled ribosomes mediated by trans-translation. Binds to transfer-messenger RNA (tmRNA), required for stable association of tmRNA with ribosomes. tmRNA and SmpB together mimic tRNA shape, replacing the anticodon stem-loop with SmpB. tmRNA is encoded by the ssrA gene; the 2 termini fold to resemble tRNA(Ala) and it encodes a 'tag peptide', a short internal open reading frame. During trans-translation Ala-aminoacylated tmRNA acts like a tRNA, entering the A-site of stalled ribosomes, displacing the stalled mRNA. The ribosome then switches to translate the ORF on the tmRNA; the nascent peptide is terminated with the 'tag peptide' encoded by the tmRNA and targeted for degradation. The ribosome is freed to recommence translation, which seems to be the essential function of trans-translation. This Chlamydia trachomatis serovar A (strain ATCC VR-571B / DSM 19440 / HAR-13) protein is SsrA-binding protein.